The primary structure comprises 337 residues: Prenyltransferase terC (337 aa).

Aspartate 111 and aspartate 115 together coordinate Mg(2+).

The protein belongs to the FPP/GGPP synthase family. Requires Mg(2+) as cofactor.

The protein operates within secondary metabolite biosynthesis. In terms of biological role, prenyltransferase; part of the gene cluster that mediates the biosynthesis of terpendoles, indole-diterpene (IDT) mycotoxins including terpendole I, terpendole K, terpendole C, as well as the kinesin Eg5 inhibitor terpendole E. Terpendoles biosynthesis begins with the synthesis of geranylgeranyl diphosphate (GGPP) by a yet unidentified GGPP synthase. Condensation of indole-3-glycerol phosphate with GGPP by the prenyltransferase terC then forms 3-geranylgeranylindole (3-GGI), followed by epoxidation and cyclization of this intermediate (by the FAD-dependent monooxygeanse terM and the terpene cyclase terB) to form paspaline. The cytochrome monooxygenase terQ then hydroxylates paspalline at C-11 to yield terpendole E. The cytochrome monooxygenase terP converts terpendole E to 13-desoxyterpendole I, and terQ converts 13-desoxyterpendole I into terpendole I. TerF and terK are required for conversion of terpendole I to terpendole C which is further converted to terpendole K. This Tolypocladium album (Soil fungus) protein is Prenyltransferase terC.